Reading from the N-terminus, the 776-residue chain is Endonuclease MutS2 (776 aa).

Gly-330–Thr-337 lines the ATP pocket. One can recognise a Smr domain in the interval Leu-701 to Lys-776.

The protein belongs to the DNA mismatch repair MutS family. MutS2 subfamily. In terms of assembly, homodimer. Binds to stalled ribosomes, contacting rRNA.

Endonuclease that is involved in the suppression of homologous recombination and thus may have a key role in the control of bacterial genetic diversity. In terms of biological role, acts as a ribosome collision sensor, splitting the ribosome into its 2 subunits. Detects stalled/collided 70S ribosomes which it binds and splits by an ATP-hydrolysis driven conformational change. Acts upstream of the ribosome quality control system (RQC), a ribosome-associated complex that mediates the extraction of incompletely synthesized nascent chains from stalled ribosomes and their subsequent degradation. Probably generates substrates for RQC. The sequence is that of Endonuclease MutS2 from Lactococcus lactis subsp. lactis (strain IL1403) (Streptococcus lactis).